The chain runs to 558 residues: Potassium-transporting ATPase potassium-binding subunit (558 aa).

Transmembrane regions (helical) follow at residues 1–21 (MDTL…VLVH), 58–78 (WPAY…VVYG), 85–105 (FLPY…NTAV), 130–150 (GLAV…IALV), 179–199 (LSLV…FAGF), 245–265 (PTAW…FSLP), 279–299 (TAIA…LTLF), 374–394 (GLYG…LLVG), 416–436 (ILVT…IPAV), 484–504 (ALGV…LALA), and 527–547 (FVGL…FPVL).

It belongs to the KdpA family. The system is composed of three essential subunits: KdpA, KdpB and KdpC.

Its subcellular location is the cell membrane. Its function is as follows. Part of the high-affinity ATP-driven potassium transport (or Kdp) system, which catalyzes the hydrolysis of ATP coupled with the electrogenic transport of potassium into the cytoplasm. This subunit binds the extracellular potassium ions and delivers the ions to the membrane domain of KdpB through an intramembrane tunnel. In Clavibacter sepedonicus (Clavibacter michiganensis subsp. sepedonicus), this protein is Potassium-transporting ATPase potassium-binding subunit.